The primary structure comprises 223 residues: Ribosome assembly factor mrt4 (223 aa).

This sequence belongs to the universal ribosomal protein uL10 family. As to quaternary structure, associates with the pre-60S ribosomal particle.

Its subcellular location is the nucleus. It localises to the nucleolus. The protein resides in the cytoplasm. Functionally, component of the ribosome assembly machinery. Nuclear paralog of the ribosomal protein P0, it binds pre-60S subunits at an early stage of assembly in the nucleolus, and is replaced by P0 in cytoplasmic pre-60S subunits and mature 80S ribosomes. The protein is Ribosome assembly factor mrt4 of Dictyostelium discoideum (Social amoeba).